A 1050-amino-acid chain; its full sequence is Self-sufficient cytochrome P450 monooxygenase CYP505E5 (1050 aa).

Position 405 (C405) interacts with heme. The disordered stretch occupies residues 467–491 (RRSMLVARDGSSGESSNHLAEARGD). The Flavodoxin-like domain maps to 500 to 641 (VSFFYGSNSG…DLEAWEETSL (142 aa)). FMN contacts are provided by residues 506–510 (SNSGT) and 585–617 (VFGCGHHDWTQTFYRIPILIDDLMHKAGATRLA). One can recognise an FAD-binding FR-type domain in the interval 679-907 (KGLIEAKVTA…RPAKESFHLP (229 aa)).

In the N-terminal section; belongs to the cytochrome P450 family. The cofactor is FAD. Requires FMN as cofactor. Heme serves as cofactor.

It carries out the reaction 2 oxidized [cytochrome P450] + NADPH = 2 reduced [cytochrome P450] + NADP(+) + H(+). The enzyme catalyses an organic molecule + reduced [NADPH--hemoprotein reductase] + O2 = an alcohol + oxidized [NADPH--hemoprotein reductase] + H2O + H(+). It catalyses the reaction dodecanoate + reduced [NADPH--hemoprotein reductase] + O2 = 5-hydroxydodecanoate + oxidized [NADPH--hemoprotein reductase] + H2O + H(+). The catalysed reaction is tetradecanoate + reduced [NADPH--hemoprotein reductase] + O2 = 7-hydroxytetradecanoate + oxidized [NADPH--hemoprotein reductase] + H2O + H(+). It carries out the reaction dodecan-1-ol + reduced [NADPH--hemoprotein reductase] + O2 = 1,5-dodecanediol + oxidized [NADPH--hemoprotein reductase] + H2O + H(+). The enzyme catalyses dodecan-1-ol + reduced [NADPH--hemoprotein reductase] + O2 = 1,4-dodecanediol + oxidized [NADPH--hemoprotein reductase] + H2O + H(+). It catalyses the reaction dodecan-1-ol + reduced [NADPH--hemoprotein reductase] + O2 = 1,6-dodecanediol + oxidized [NADPH--hemoprotein reductase] + H2O + H(+). In terms of biological role, self-sufficient cytochrome P450 monooxygenase that catalyzes the regioselective in-chain hydroxylation of alkanes, fatty alcohols, and fatty acids at the omega-7 position. Performs hydroxylation of C10-C16 n-alkanes and C12 and C14 fatty alcohols; and thereby enables the one step biocatalytic synthesis of rare alcohols such as 5-dodecanol and 7-tetradecanol. Converts 1-dodecanol into 1,5-dodecanediol as major product with very little sub-terminally hydroxylated products with the 1,4-dodecanediol and 1,6-dodecanediol more abundant. Converts dodecanoic acid to 5-hydroxydodecanoic acid which can be further converted into delta-dodecalactone by lactonization of the 5-hydroxy acid at low pH. Also gives sub-terminal hydroxylation of dodecanoic acid with 9-hydroxydodecanoic acid being the second most abundant product. This chain is Self-sufficient cytochrome P450 monooxygenase CYP505E5, found in Aspergillus niger.